Reading from the N-terminus, the 259-residue chain is Deoxyribose-phosphate aldolase (259 aa).

Asp102 functions as the Proton donor/acceptor in the catalytic mechanism. Lys167 acts as the Schiff-base intermediate with acetaldehyde in catalysis. The Proton donor/acceptor role is filled by Lys201.

It belongs to the DeoC/FbaB aldolase family. DeoC type 2 subfamily.

The protein resides in the cytoplasm. It catalyses the reaction 2-deoxy-D-ribose 5-phosphate = D-glyceraldehyde 3-phosphate + acetaldehyde. It participates in carbohydrate degradation; 2-deoxy-D-ribose 1-phosphate degradation; D-glyceraldehyde 3-phosphate and acetaldehyde from 2-deoxy-alpha-D-ribose 1-phosphate: step 2/2. Catalyzes a reversible aldol reaction between acetaldehyde and D-glyceraldehyde 3-phosphate to generate 2-deoxy-D-ribose 5-phosphate. The protein is Deoxyribose-phosphate aldolase of Cronobacter sakazakii (strain ATCC BAA-894) (Enterobacter sakazakii).